The sequence spans 302 residues: Methionyl-tRNA formyltransferase (302 aa).

103–106 (SLLP) contributes to the (6S)-5,6,7,8-tetrahydrofolate binding site.

Belongs to the Fmt family.

The catalysed reaction is L-methionyl-tRNA(fMet) + (6R)-10-formyltetrahydrofolate = N-formyl-L-methionyl-tRNA(fMet) + (6S)-5,6,7,8-tetrahydrofolate + H(+). Its function is as follows. Attaches a formyl group to the free amino group of methionyl-tRNA(fMet). The formyl group appears to play a dual role in the initiator identity of N-formylmethionyl-tRNA by promoting its recognition by IF2 and preventing the misappropriation of this tRNA by the elongation apparatus. The sequence is that of Methionyl-tRNA formyltransferase from Pseudothermotoga lettingae (strain ATCC BAA-301 / DSM 14385 / NBRC 107922 / TMO) (Thermotoga lettingae).